A 294-amino-acid chain; its full sequence is Cytidine deaminase (294 aa).

CMP/dCMP-type deaminase domains lie at 48–168 (DEDA…FGPK) and 186–294 (LTGD…VLLG). 89–91 (NME) contacts substrate. H102 provides a ligand contact to Zn(2+). Catalysis depends on E104, which acts as the Proton donor. 2 residues coordinate Zn(2+): C129 and C132.

It belongs to the cytidine and deoxycytidylate deaminase family. Homodimer. Requires Zn(2+) as cofactor.

The enzyme catalyses cytidine + H2O + H(+) = uridine + NH4(+). The catalysed reaction is 2'-deoxycytidine + H2O + H(+) = 2'-deoxyuridine + NH4(+). Its function is as follows. This enzyme scavenges exogenous and endogenous cytidine and 2'-deoxycytidine for UMP synthesis. The polypeptide is Cytidine deaminase (Salmonella schwarzengrund (strain CVM19633)).